The chain runs to 237 residues: Concanavalin-Br (237 aa).

Mn(2+)-binding residues include Glu-8 and Asp-10. Ca(2+)-binding residues include Asp-10, Tyr-12, Asn-14, and Asp-19. Tyr-12 provides a ligand contact to a carbohydrate. The Mn(2+) site is built by Asp-19, His-24, and Ser-34. Residue 99 to 100 coordinates a carbohydrate; sequence LY. Asp-208 contributes to the Ca(2+) binding site. Arg-228 contributes to the a carbohydrate binding site.

It belongs to the leguminous lectin family. As to quaternary structure, homotetramer.

In terms of biological role, glucose/D-mannose specific lectin. Has anti-inflammatory activity in rats. Induces histamine release in mast cells from hamster and rat. Induces lymphocyte proliferation and IFNG production. Shows toxicity against the aquatic snail B.glabrata at concentrations higher than 20 ug/ml. This Canavalia brasiliensis (Brazilian jack bean) protein is Concanavalin-Br.